The primary structure comprises 875 residues: cGMP-specific 3',5'-cyclic phosphodiesterase (875 aa).

Disordered regions lie at residues 1–29 and 78–102; these read MERA…DQDS and SCSC…RKIS. A compositionally biased stretch (low complexity) spans 10-22; that stretch reads QQRQQQQPQQQKQ. Positions 78–101 are enriched in polar residues; sequence SCSCPLQQSPRADNSAPGTPTRKI. S102 carries the phosphoserine modification. GAF domains are found at residues 164 to 314 and 346 to 503; these read DVTA…GIVL and SLEV…GLGI. In terms of domain architecture, PDEase spans 536 to 860; the sequence is ETRELQSLAA…QKWQALAEQQ (325 aa). Catalysis depends on H613, which acts as the Proton donor. H617, H653, D654, and D764 together coordinate Zn(2+). D654 contributes to the Mg(2+) binding site. Q817 contributes to the 3',5'-cyclic GMP binding site.

It belongs to the cyclic nucleotide phosphodiesterase family. Requires Zn(2+) as cofactor. Mg(2+) serves as cofactor. Post-translationally, phosphorylation is regulated by binding of cGMP to the two allosteric sites. Phosphorylation by PRKG1 leads to its activation. As to expression, expressed in aortic smooth muscle cells, heart, placenta, skeletal muscle and pancreas and, to a much lesser extent, in brain, liver and lung.

The enzyme catalyses 3',5'-cyclic GMP + H2O = GMP + H(+). It participates in purine metabolism; 3',5'-cyclic GMP degradation; GMP from 3',5'-cyclic GMP: step 1/1. With respect to regulation, sildenafil (Viagra) is a highly selective and potent inhibitor of PDE5A and is effective in the treatment of penile erectile dysfunction. Also inhibited by zaprinast. Functionally, plays a role in signal transduction by regulating the intracellular concentration of cyclic nucleotides. This phosphodiesterase catalyzes the specific hydrolysis of cGMP to 5'-GMP. Specifically regulates nitric-oxide-generated cGMP. This chain is cGMP-specific 3',5'-cyclic phosphodiesterase, found in Homo sapiens (Human).